The chain runs to 431 residues: Keratin, type I cytoskeletal 20 (431 aa).

The disordered stretch occupies residues 1-23 (MDFSRQSFHRSLSSSSQGPALSM). A head region spans residues 1-76 (MDFSRQSFHR…SNGSDLFGGN (76 aa)). Ser-13 is modified (phosphoserine; by MAPKAPK2, MAPKAPK3 and PKC). Phosphoserine is present on residues Ser-16 and Ser-26. Residues 77–112 (GKLAMQNLNDRLANYLEKVRSLEQSNSRLEAQIKQW) form a coil 1A region. The 312-residue stretch at 77–388 (GKLAMQNLND…RLLEGEDIKT (312 aa)) folds into the IF rod domain. The linker 1 stretch occupies residues 113–130 (YETNAPSTIRDYSSYYAQ). Residues 131 to 222 (IKELQNQVKD…KEHQEEVEVL (92 aa)) are coil 1B. Positions 223–245 (RRQLGNNVNVEVDAAPGLNLGEI) are linker 12. Positions 246 to 384 (MNEMRQRYEV…ATYRRLLEGE (139 aa)) are coil 2. The interval 385 to 431 (DIKTTEYQLSTLEMKDIKKTRKIKTVVEEVVDGKVVSSEVKEIEESV) is tail.

Belongs to the intermediate filament family. Heterotetramer of two type I and two type II keratins. Associates with KRT8. Hyperphosphorylation at Ser-13 occurs during the early stages of apoptosis but becomes less prominent during the later stages. Phosphorylation at Ser-13 also increases in response to stress brought on by cell injury. Post-translationally, proteolytically cleaved by caspases during apoptosis. Cleavage occurs at Asp-235. In terms of tissue distribution, expressed at low levels in the more differentiated suprabasal regions of the small intestine, and at higher levels in the colon, mainly in the upper region and in scattered cells throughout the remaining epithelium. Also expressed in epithelial cells of bladder, ileum and stomach and at lower levels in pancreas and earskin. The phosphorylated form is nearly exclusively expressed in goblet cells of the small intestine and in the lumen-proximal cells of the colon (at protein level). Also expressed in jejunum and duodenum.

Its function is as follows. Plays a significant role in maintaining keratin filament organization in intestinal epithelia. When phosphorylated, plays a role in the secretion of mucin in the small intestine. The protein is Keratin, type I cytoskeletal 20 of Mus musculus (Mouse).